Consider the following 150-residue polypeptide: uncharacterized protein (150 aa).

The Flavodoxin-like domain occupies 4–148 (LILYKSIHHK…KAKEFAKSIL (145 aa)).

This is an uncharacterized protein from Methanocaldococcus jannaschii (strain ATCC 43067 / DSM 2661 / JAL-1 / JCM 10045 / NBRC 100440) (Methanococcus jannaschii).